Reading from the N-terminus, the 189-residue chain is UPF0688 protein C1orf174 homolog (189 aa).

Positions 53-137 (QMAGDGGEAK…TTDPSVFFDE (85 aa)) are disordered. 2 stretches are compositionally biased toward basic and acidic residues: residues 59 to 73 (GEAK…HGEV) and 93 to 103 (APGERRGKENS).

It belongs to the UPF0688 family.

The protein localises to the nucleus. The polypeptide is UPF0688 protein C1orf174 homolog (Danio rerio (Zebrafish)).